The primary structure comprises 137 residues: Fatty acid-binding protein homolog 7 (137 aa).

Belongs to the calycin superfamily. Fatty-acid binding protein (FABP) family.

This Caenorhabditis elegans protein is Fatty acid-binding protein homolog 7 (lbp-7).